A 200-amino-acid chain; its full sequence is Prophage tail fiber assembly protein homolog TfaE (200 aa).

It belongs to the tfa family.

This chain is Prophage tail fiber assembly protein homolog TfaE (tfaE), found in Escherichia coli (strain K12).